The primary structure comprises 485 residues: ETS translocation variant 4 (485 aa).

Lys6 is covalently cross-linked (Glycyl lysine isopeptide (Lys-Gly) (interchain with G-Cter in SUMO2)). 2 disordered regions span residues 79 to 114 (PDFHSENSFHSPTTRIKKEPQSPRTDPALSCSRKPP) and 135 to 214 (IAIK…QHQL). Lys95 participates in a covalent cross-link: Glycyl lysine isopeptide (Lys-Gly) (interchain with G-Cter in SUMO). Ser100 is subject to Phosphoserine. Residue Lys138 forms a Glycyl lysine isopeptide (Lys-Gly) (interchain with G-Cter in SUMO2) linkage. Phosphoserine is present on residues Ser139 and Ser148. Positions 158 to 171 (QQQSLLRASSSSQS) are enriched in low complexity. Phosphoserine is present on Ser215. Residues Lys227 and Lys261 each participate in a glycyl lysine isopeptide (Lys-Gly) (interchain with G-Cter in SUMO) cross-link. Residue Lys323 forms a Glycyl lysine isopeptide (Lys-Gly) (interchain with G-Cter in SUMO2) linkage. Residues 342-422 (LQLWQFLVAL…AGERYVYKFV (81 aa)) constitute a DNA-binding region (ETS).

It belongs to the ETS family. In terms of processing, sumoylated; enhanced upon ERK/MAP kinase pathway activation it positively regulates the transcriptional activator capacity. Sumoylation at Lys-95 probably requires phosphorylation at Ser-100. Transiently polysumoylated and desumoylated by SENP1. Sumoylation is a prerequisite to polyubiquitination which in turn increases proteasomal-mediated degradation. Probably polyubiquitinated by RNF4 and deubiquitinated by USP2. As to expression, epididymis and brain.

It is found in the nucleus. In terms of biological role, transcriptional activator. May play a role in keratinocyte differentiation. This is ETS translocation variant 4 (Etv4) from Mus musculus (Mouse).